A 369-amino-acid polypeptide reads, in one-letter code: Queuine tRNA-ribosyltransferase (369 aa).

The active-site Proton acceptor is aspartate 90. Residues 90-94 (DSGGF), aspartate 144, glutamine 186, and glycine 213 each bind substrate. The RNA binding stretch occupies residues 244–250 (GVGKPAD). Aspartate 263 serves as the catalytic Nucleophile. 4 residues coordinate Zn(2+): cysteine 301, cysteine 303, cysteine 306, and histidine 332.

Belongs to the queuine tRNA-ribosyltransferase family. Homodimer. Within each dimer, one monomer is responsible for RNA recognition and catalysis, while the other monomer binds to the replacement base PreQ1. Requires Zn(2+) as cofactor.

It carries out the reaction 7-aminomethyl-7-carbaguanine + guanosine(34) in tRNA = 7-aminomethyl-7-carbaguanosine(34) in tRNA + guanine. The protein operates within tRNA modification; tRNA-queuosine biosynthesis. Its function is as follows. Catalyzes the base-exchange of a guanine (G) residue with the queuine precursor 7-aminomethyl-7-deazaguanine (PreQ1) at position 34 (anticodon wobble position) in tRNAs with GU(N) anticodons (tRNA-Asp, -Asn, -His and -Tyr). Catalysis occurs through a double-displacement mechanism. The nucleophile active site attacks the C1' of nucleotide 34 to detach the guanine base from the RNA, forming a covalent enzyme-RNA intermediate. The proton acceptor active site deprotonates the incoming PreQ1, allowing a nucleophilic attack on the C1' of the ribose to form the product. After dissociation, two additional enzymatic reactions on the tRNA convert PreQ1 to queuine (Q), resulting in the hypermodified nucleoside queuosine (7-(((4,5-cis-dihydroxy-2-cyclopenten-1-yl)amino)methyl)-7-deazaguanosine). This is Queuine tRNA-ribosyltransferase from Dichelobacter nodosus (strain VCS1703A).